The sequence spans 119 residues: Large ribosomal subunit protein bL20 (119 aa).

Belongs to the bacterial ribosomal protein bL20 family.

Binds directly to 23S ribosomal RNA and is necessary for the in vitro assembly process of the 50S ribosomal subunit. It is not involved in the protein synthesizing functions of that subunit. This chain is Large ribosomal subunit protein bL20, found in Xanthomonas oryzae pv. oryzae (strain PXO99A).